Here is a 421-residue protein sequence, read N- to C-terminus: Forkhead box protein fkh-4 (421 aa).

The fork-head DNA-binding region spans 118 to 218 (RPPISYVALC…SDADFDFFRK (101 aa)).

It is found in the nucleus. Functionally, transcription factor. Regulates expression of a class of small RNAs, known as 21U-RNAs, perhaps acting redundantly with fkh-3 and fkh-5. This chain is Forkhead box protein fkh-4, found in Caenorhabditis elegans.